Here is a 1178-residue protein sequence, read N- to C-terminus: Double-stranded RNA-specific adenosine deaminase (1178 aa).

A disordered region spans residues 1–40; sequence MSQGFRGPTGVFPHQTQSYLDPSHEHSKWRYPQPQGPESY. Arg30 and Arg42 each carry asymmetric dimethylarginine. Positions 135-201 constitute a Z-binding 1 domain; the sequence is LSISQSPEQK…GKPPLWSLVP (67 aa). The interaction with Z-DNA stretch occupies residues 135–204; that stretch reads LSISQSPEQK…PLWSLVPLSQ (70 aa). Residues 221–244 form a disordered region; the sequence is EFPRGEPGLDSEDGDPASDLEGPS. Residues 229–238 are compositionally biased toward acidic residues; sequence LDSEDGDPAS. Ser231 and Ser238 each carry phosphoserine. The region spanning 246-310 is the Z-binding 2 domain; that stretch reads PLDMAEIKEK…ATPPIWYLTD (65 aa). The tract at residues 316–383 is disordered; it reads LQMKRSTHSA…SRHEARPGPM (68 aa). A compositionally biased stretch (low complexity) spans 323–337; that stretch reads HSAPAPTPTAVPEAT. Over residues 360–379 the composition is skewed to basic and acidic residues; it reads KRVENGQEPAIKHESRHEAR. A Glycyl lysine isopeptide (Lys-Gly) (interchain with G-Cter in SUMO); alternate cross-link involves residue Lys371. Lys371 participates in a covalent cross-link: Glycyl lysine isopeptide (Lys-Gly) (interchain with G-Cter in SUMO1); alternate. Lys371 is covalently cross-linked (Glycyl lysine isopeptide (Lys-Gly) (interchain with G-Cter in SUMO2); alternate). Ser434 bears the Phosphoserine mark. Residues 456-524 form the DRBM 1 domain; that stretch reads NPVSGLLEYA…AVKAMAILLR (69 aa). Residues 527–550 show a composition bias toward basic and acidic residues; the sequence is KAKDSGQPEDLSHCPMEEDSEKPA. A disordered region spans residues 527 to 564; that stretch reads KAKDSGQPEDLSHCPMEEDSEKPAEAQAPSSSATSLFS. Polar residues predominate over residues 554 to 564; the sequence is APSSSATSLFS. Phosphoserine occurs at positions 567, 582, and 589. Positions 567–635 constitute a DRBM 2 domain; the sequence is SPVTTLLECM…AEEAMKALQE (69 aa). The segment at 631–657 is disordered; that stretch reads KALQEEAASSADDQSGGANTDSLDESM. A compositionally biased stretch (low complexity) spans 635–648; the sequence is EEAASSADDQSGGA. The tract at residues 665 to 674 is N-terminal extension of DRBM 3 and constituent of a bi-partite nuclear localization signal; the sequence is IGELVRYLNT. The DRBM 3 domain occupies 675 to 743; the sequence is NPVGGLLEYA…ADAALRVLIG (69 aa). Residues 744–750 form a C-terminal extension of DRBM 3 and constituent of a bi-partite nuclear localization signal region; sequence ESEKAEQ. Thr757 carries the phosphothreonine modification. Phosphoserine is present on residues Ser763, Ser772, and Ser774. A Glycyl lysine isopeptide (Lys-Gly) (interchain with G-Cter in SUMO2) cross-link involves residue Lys824. The A to I editase domain occupies 835–1170; sequence SLGTGNRCVK…ISKPQEEKNF (336 aa). His859 contacts Zn(2+). Glu861 acts as the Proton donor in catalysis. Residues Cys915 and Cys985 each contribute to the Zn(2+) site.

As to quaternary structure, homodimer. Homodimerization is essential for its catalytic activity. Isoform 5 can form heterodimers with ADARB1/ADAR2. Isoform 1 and isoform 5 (via DRBM 3 domain) interact with TNPO1. Isoform 5 (via DRBM domains) interacts with XPO5. Isoform 1 and isoform 5 can interact with UPF1. Isoform 1 interacts with ILF2/NF45 and ILF3/NF90. Binding to ILF3/NF90 up-regulates ILF3-mediated gene expression. Isoform 1 and isoform 5 interact with EIF2AK2/PKR. Sumoylation reduces RNA-editing activity. As to expression, highest levels in brain and spleen. Lowest levels in liver.

Its subcellular location is the cytoplasm. It localises to the nucleus. The protein localises to the nucleolus. The catalysed reaction is adenosine in double-stranded RNA + H2O + H(+) = inosine in double-stranded RNA + NH4(+). In terms of biological role, catalyzes the hydrolytic deamination of adenosine to inosine in double-stranded RNA (dsRNA) referred to as A-to-I RNA editing. This may affect gene expression and function in a number of ways that include mRNA translation by changing codons and hence the amino acid sequence of proteins since the translational machinery read the inosine as a guanosine; pre-mRNA splicing by altering splice site recognition sequences; RNA stability by changing sequences involved in nuclease recognition; genetic stability in the case of RNA virus genomes by changing sequences during viral RNA replication; and RNA structure-dependent activities such as microRNA production or targeting or protein-RNA interactions. Can edit both viral and cellular RNAs and can edit RNAs at multiple sites (hyper-editing) or at specific sites (site-specific editing). Its cellular RNA substrates include: bladder cancer-associated protein (BLCAP), neurotransmitter receptors for glutamate (GRIA2) and serotonin (HTR2C) and GABA receptor (GABRA3). Site-specific RNA editing of transcripts encoding these proteins results in amino acid substitutions which consequently alters their functional activities. Exhibits low-level editing at the GRIA2 Q/R site, but edits efficiently at the R/G site and HOTSPOT1. Does not affect polyomavirus replication but provides protection against virus-induced cytopathic effects. Essential for embryonic development and cell survival and plays a critical role in the maintenance of hematopoietic stem cells. The polypeptide is Double-stranded RNA-specific adenosine deaminase (Adar) (Mus musculus (Mouse)).